Reading from the N-terminus, the 465-residue chain is tRNA (guanine(37)-N(1))-methyltransferase (465 aa).

S-adenosyl-L-methionine-binding positions include histidine 189, 227–228 (DL), and 255–256 (DA). The interval 283 to 362 (YPKEGVPANE…GPGPPPSKPW (80 aa)) is disordered. Residues 291–320 (NENSSSNGNHNDVREGSQNGANESSVASTT) are compositionally biased toward polar residues. The span at 343-352 (TKRRNNKRVR) shows a compositional bias: basic residues. Asparagine 371 contributes to the S-adenosyl-L-methionine binding site.

This sequence belongs to the class I-like SAM-binding methyltransferase superfamily. TRM5/TYW2 family. In terms of assembly, monomer.

It is found in the mitochondrion matrix. The protein localises to the nucleus. The protein resides in the cytoplasm. The enzyme catalyses guanosine(37) in tRNA + S-adenosyl-L-methionine = N(1)-methylguanosine(37) in tRNA + S-adenosyl-L-homocysteine + H(+). Its function is as follows. Specifically methylates the N1 position of guanosine-37 in various cytoplasmic and mitochondrial tRNAs. Methylation is not dependent on the nature of the nucleoside 5' of the target nucleoside. This is the first step in the biosynthesis of wybutosine (yW), a modified base adjacent to the anticodon of tRNAs and required for accurate decoding. This Sorghum bicolor (Sorghum) protein is tRNA (guanine(37)-N(1))-methyltransferase.